We begin with the raw amino-acid sequence, 121 residues long: Large ribosomal subunit protein bL12 (121 aa).

This sequence belongs to the bacterial ribosomal protein bL12 family. In terms of assembly, homodimer. Part of the ribosomal stalk of the 50S ribosomal subunit. Forms a multimeric L10(L12)X complex, where L10 forms an elongated spine to which 2 to 4 L12 dimers bind in a sequential fashion. Binds GTP-bound translation factors.

In terms of biological role, forms part of the ribosomal stalk which helps the ribosome interact with GTP-bound translation factors. Is thus essential for accurate translation. This Aliivibrio salmonicida (strain LFI1238) (Vibrio salmonicida (strain LFI1238)) protein is Large ribosomal subunit protein bL12.